The chain runs to 166 residues: Ribonuclease P protein component (166 aa).

The protein belongs to the RnpA family. In terms of assembly, consists of a catalytic RNA component (M1 or rnpB) and a protein subunit.

It catalyses the reaction Endonucleolytic cleavage of RNA, removing 5'-extranucleotides from tRNA precursor.. Functionally, RNaseP catalyzes the removal of the 5'-leader sequence from pre-tRNA to produce the mature 5'-terminus. It can also cleave other RNA substrates such as 4.5S RNA. The protein component plays an auxiliary but essential role in vivo by binding to the 5'-leader sequence and broadening the substrate specificity of the ribozyme. The polypeptide is Ribonuclease P protein component (Helicobacter pylori (strain HPAG1)).